A 638-amino-acid polypeptide reads, in one-letter code: Ubiquitin-associated and SH3 domain-containing protein B (638 aa).

Residue Ser9 is modified to Phosphoserine. Position 12 is a phosphothreonine (Thr12). The UBA domain maps to 23 to 65 (TVKHGSALDVLLSMGFPRARAQKALASTGGRSVQAACDWLFSH). Residues 243–308 (ANHETLQVIY…PENYITKADE (66 aa)) enclose the SH3 domain. The interval 369–638 (GPQKRCLFVC…FNWRETLLQE (270 aa)) is protein tyrosine phosphatase. Arg379 is an active-site residue. Catalysis depends on His380, which acts as the Tele-phosphohistidine intermediate. His565 is an active-site residue.

In terms of assembly, homodimer. Interacts with JAK2 (in vitro). Interacts with CBL. Part of a complex containing CBL and activated EGFR. Interacts with ubiquitin and with mono-ubiquitinated proteins. Interacts with ZAP70 (ubiquitinated form). Detected in splenic T-cells and B-cells, total spleen, skeletal muscle, heart, lung, kidney, thymus, brain and liver (at protein level). Highly expressed in brain. Detected in heart, spleen, lung, liver, kidney and testis.

The protein resides in the cytoplasm. Its subcellular location is the nucleus. The catalysed reaction is O-phospho-L-tyrosyl-[protein] + H2O = L-tyrosyl-[protein] + phosphate. In terms of biological role, interferes with CBL-mediated down-regulation and degradation of receptor-type tyrosine kinases. Promotes accumulation of activated target receptors, such as T-cell receptors and EGFR, on the cell surface. Exhibits tyrosine phosphatase activity toward several substrates including EGFR, FAK, SYK, and ZAP70. Down-regulates proteins that are dually modified by both protein tyrosine phosphorylation and ubiquitination. The sequence is that of Ubiquitin-associated and SH3 domain-containing protein B (Ubash3b) from Mus musculus (Mouse).